The chain runs to 566 residues: Insulinoma-associated protein 2 (566 aa).

Residues 1-20 form an SNAG domain region; it reads MPRGFLVKRTKRTGGLYRVR. A disordered region spans residues 32–117; that stretch reads QGAPPFLEEA…PSPSPAKPAG (86 aa). Positions 103 to 113 are enriched in pro residues; that stretch reads GPSPSPSPSPA. A C2H2-type 1; atypical zinc finger spans residues 263-283; sequence FICQLCKEQYADPFALAQHRC. The C2H2-type 2 zinc finger occupies 291–313; that stretch reads YRCPECDKVFSCPANLASHRRWH. The tract at residues 310–418 is disordered; sequence RRWHKPRPAA…RRVPVPGSTS (109 aa). Over residues 318 to 348 the composition is skewed to low complexity; the sequence is AAANAATVSSADGKPPSSSSSSSRDSGAIAS. Residues 352–369 show a composition bias toward basic and acidic residues; that stretch reads EGKENSRIERTADQHPQA. 3 C2H2-type zinc fingers span residues 426–448, 470–492, and 525–548; these read FVCP…LSTH, FACP…RLWH, and FSCK…NKCH.

Expressed in heart, liver, skeletal muscle, kidney and pancreas, and, to a lesser extent, in brain, lung and spleen. In the pancreas, expressed in islet cells, including insulin- and glucagon-producing alpha- and beta-cells, but not in acinar cells (at protein level). Detected in adrenal glands, particularly in the deeper layer of the cortex (at protein level).

The protein resides in the cytoplasm. It is found in the nucleus. Its function is as follows. May function as a growth suppressor or tumor suppressor in liver cells and in certain neurons. The protein is Insulinoma-associated protein 2 (INSM2) of Homo sapiens (Human).